A 408-amino-acid chain; its full sequence is Multidrug resistance protein MdtG (408 aa).

Transmembrane regions (helical) follow at residues 16–36, 58–78, 92–112, 115–135, 146–166, 173–193, 224–244, 256–276, 290–310, 319–339, and 378–398; these read LIVA…VMPF, IVFS…GGLA, LGMG…QFLI, ALLG…ATQV, TLST…GLLA, PVFF…LFCI, LFVT…ILTL, VAFI…LSAP, ILIT…YVQT, FLLG…LVYN, and AVFL…WNSL.

This sequence belongs to the major facilitator superfamily. DHA1 family. MdtG (TC 2.A.1.2.20) subfamily.

It localises to the cell inner membrane. In terms of biological role, confers resistance to fosfomycin and deoxycholate. In Escherichia coli O139:H28 (strain E24377A / ETEC), this protein is Multidrug resistance protein MdtG.